The chain runs to 482 residues: Potential E3 ubiquitin-protein ligase ariadne-2 (482 aa).

Residues 125–334 form a TRIAD supradomain region; the sequence is AKGYCSVCAM…SEYYECSRYK (210 aa). Zn(2+) contacts are provided by C129, C132, C145, H147, C150, C153, C172, C177, C218, C223, C239, C242, C247, C250, H255, C260, C287, and C290. An RING-type 1 zinc finger spans residues 129-177; that stretch reads CSVCAMDGYTELPHLTCGHCFCEHCWKSHVESRLSEGVASRIECMESEC. Residues 198–260 form an IBR-type zinc finger; sequence LKYERFLLRD…GADYHAPTSC (63 aa). The RING-type 2; atypical zinc finger occupies 287–316; sequence CPQCHSCIEKAGGCNHIQCTRCRHHFCWMC. Residue C300 is part of the active site. Zn(2+) contacts are provided by C305, C308, C313, C316, H323, and C330. The stretch at 433–459 forms a coiled coil; sequence FEYQQAQLEKEVEELAWAVERADGTAR.

Belongs to the RBR family. Ariadne subfamily.

The protein resides in the nucleus. The enzyme catalyses [E2 ubiquitin-conjugating enzyme]-S-ubiquitinyl-L-cysteine + [acceptor protein]-L-lysine = [E2 ubiquitin-conjugating enzyme]-L-cysteine + [acceptor protein]-N(6)-ubiquitinyl-L-lysine.. Functionally, might act as an E3 ubiquitin-protein ligase, or as part of E3 complex, which accepts ubiquitin from specific E2 ubiquitin-conjugating enzymes, such as UBC-2/UBE2L3, and then transfers it to substrates. In Caenorhabditis elegans, this protein is Potential E3 ubiquitin-protein ligase ariadne-2.